Reading from the N-terminus, the 671-residue chain is Vinexin (671 aa).

Gln-2 carries the post-translational modification N-acetylalanine. Arg-6 is modified (phosphoserine). 5 disordered regions span residues 46 to 111 (LNFQ…TKDS), 166 to 215 (TFEE…RPGA), 249 to 268 (LETG…EKPS), 295 to 324 (TRLP…AWSS), and 337 to 383 (SLSP…KKRK). Residues 88-108 (PSASTKIPASQHTQNWSATWT) show a composition bias toward polar residues. The region spanning 115-187 (DKRWVKYEGI…GAQQRPAHRP (73 aa)) is the SoHo domain. Ser-348 carries the post-translational modification Phosphoserine. Residues 359 to 368 (PSSTRDPSAS) are compositionally biased toward polar residues. SH3 domains follow at residues 380 to 439 (KKRK…VLPA) and 454 to 515 (LEYG…VSRE). The segment at 380 to 515 (KKRKAARLKF…PASYVQVSRE (136 aa)) is binds to vinculin. The residue at position 395 (Ser-395) is a Phosphoserine. Residues 519–611 (RLCDDGPQLP…LGTSSPNTSQ (93 aa)) form a disordered region. At Ser-530 the chain carries Phosphoserine; by MAPK1. Positions 535-553 (AAARSARHPSSPSALRSPA) are enriched in low complexity. 5 positions are modified to phosphoserine: Ser-544, Ser-545, Ser-547, Ser-551, and Ser-563. Positions 560–584 (GQTSPRRTGFSFPTQEPRPQTQNLG) are enriched in polar residues. Residues 612 to 671 (IHWTPYRAMYQYRPQNEDELELREGDRVDVMQQCDDGWFVGVSRRTQKFGTFPGNYVAPV) form the SH3 3 domain. A binds to SOS region spans residues 612–671 (IHWTPYRAMYQYRPQNEDELELREGDRVDVMQQCDDGWFVGVSRRTQKFGTFPGNYVAPV).

In terms of assembly, interacts with DLG5 through its third SH3 domain. Interacts with vinculin by the first two SH3 domains and the proline rich region of vinculin. Binds to SOS (guanine nucleotide exchange factor of RAS and RAC), through its third SH3 domain. The formation of this complex is down-regulated by phosphorylation of SOS. Interacts with INPPL1/SHIP2, SAFB2, SOCS7 and SRCIN1. Interacts with FASLG. Interacts with MAPK1/ERK2. Post-translationally, phosphorylated at Ser-530 by MAPK1/ERK2 during cell spreading. In terms of tissue distribution, both isoforms are expressed in different tissues like heart, placenta, brain, skeletal muscle and pancreas. Isoform beta is especially found in liver.

The protein resides in the cell junction. Its subcellular location is the cytoplasm. The protein localises to the cytoskeleton. It is found in the nucleus. Its function is as follows. Vinexin alpha isoform promotes up-regulation of actin stress fiber formation. Vinexin beta isoform plays a role in cell spreading and enhances the activation of JNK/SAPK in response to EGF stimulation by using its third SH3 domain. This chain is Vinexin (SORBS3), found in Homo sapiens (Human).